We begin with the raw amino-acid sequence, 473 residues long: Hyaluronidase-2 (473 aa).

A signal peptide spans 1-20; sequence MRAGPGPTVTLALVLAVSWA. Intrachain disulfides connect Cys-47/Cys-340 and Cys-211/Cys-227. N-linked (GlcNAc...) asparagine glycans are attached at residues Asn-74 and Asn-103. Catalysis depends on Glu-135, which acts as the Proton donor. Asn-357 is a glycosylation site (N-linked (GlcNAc...) asparagine). Residues 361–439 enclose the EGF-like domain; that stretch reads ATQYCSRAQC…YLGWSGEQCQ (79 aa). 3 disulfides stabilise this stretch: Cys-365/Cys-376, Cys-370/Cys-427, and Cys-429/Cys-438. Gly-448 is lipidated: GPI-anchor amidated glycine. Residues 449–473 constitute a propeptide, removed in mature form; the sequence is ASEAWAGSHLTSLLALAALAFTWTL.

This sequence belongs to the glycosyl hydrolase 56 family. As to quaternary structure, interacts with MST1R. As to expression, widely expressed (at protein level).

Its subcellular location is the cell membrane. It catalyses the reaction Random hydrolysis of (1-&gt;4)-linkages between N-acetyl-beta-D-glucosamine and D-glucuronate residues in hyaluronate.. Catalyzes hyaluronan degradation into small fragments that are endocytosed and degraded in lysosomes by HYAL1 and exoglycosidases. Essential for the breakdown of extracellular matrix hyaluronan. The protein is Hyaluronidase-2 (HYAL2) of Homo sapiens (Human).